A 415-amino-acid chain; its full sequence is MNNELIIKGKKAKEASYTLSFASTNEKNNGLLKISESLIKRCDEILEENKKDLEKAIEKGTSNAMLDRLKLDEERVKSIANAVADVVKLDDPIGEVTSMFKRPNGLRIGVQRVPLGVVGIIYEARPNVTADAAALCLKTGNAVILRGGSEAINSNLKIVEIISDALKEASLPEGSVQILEDTSRETATDFMRLNDYLDVLIPRGGAGLIKAVVNNATVPVIETGVGNCHIYIDDEADINMGVDIIVNAKTSRPAVCNAAEKLLVNEKIAEEFLPVAIKALKEKGVEIRGCEKTKAIVNDINLATEEDWGKEYLDYILGVKVVKDLDEAISHINKYGTKHSESIVTKNYFNSEKFLQRVDAAAVYVNASTRFTDGGEFGFGAEIGISTQKLHARGPMGLKELTTNKYIIYGNGQIR.

This sequence belongs to the gamma-glutamyl phosphate reductase family.

Its subcellular location is the cytoplasm. It carries out the reaction L-glutamate 5-semialdehyde + phosphate + NADP(+) = L-glutamyl 5-phosphate + NADPH + H(+). Its pathway is amino-acid biosynthesis; L-proline biosynthesis; L-glutamate 5-semialdehyde from L-glutamate: step 2/2. Functionally, catalyzes the NADPH-dependent reduction of L-glutamate 5-phosphate into L-glutamate 5-semialdehyde and phosphate. The product spontaneously undergoes cyclization to form 1-pyrroline-5-carboxylate. The protein is Gamma-glutamyl phosphate reductase of Clostridium perfringens (strain ATCC 13124 / DSM 756 / JCM 1290 / NCIMB 6125 / NCTC 8237 / Type A).